The chain runs to 185 residues: Ribosome-recycling factor (185 aa).

This sequence belongs to the RRF family.

The protein resides in the cytoplasm. In terms of biological role, responsible for the release of ribosomes from messenger RNA at the termination of protein biosynthesis. May increase the efficiency of translation by recycling ribosomes from one round of translation to another. This chain is Ribosome-recycling factor, found in Geobacillus thermodenitrificans (strain NG80-2).